A 130-amino-acid chain; its full sequence is Small ribosomal subunit protein uS8 (130 aa).

Belongs to the universal ribosomal protein uS8 family. As to quaternary structure, part of the 30S ribosomal subunit. Contacts proteins S5 and S12.

In terms of biological role, one of the primary rRNA binding proteins, it binds directly to 16S rRNA central domain where it helps coordinate assembly of the platform of the 30S subunit. This Vibrio parahaemolyticus serotype O3:K6 (strain RIMD 2210633) protein is Small ribosomal subunit protein uS8.